A 217-amino-acid polypeptide reads, in one-letter code: Eukaryotic translation initiation factor 4E (217 aa).

Residues 1-11 are compositionally biased toward low complexity; it reads MATVEPETTPT. Residues 1–27 form a disordered region; that stretch reads MATVEPETTPTTNPPPAEEEKTESNQE. Ala-2 is modified (N-acetylalanine). A Phosphothreonine modification is found at Thr-22. The interval 37–40 is EIF4EBP1/2/3 binding; sequence HPLQ. 56–57 serves as a coordination point for mRNA; the sequence is WQ. The tract at residues 73 to 77 is EIF4EBP1/2/3 binding; that stretch reads WALYN. 102–103 contributes to the mRNA binding site; it reads WE. Positions 132-139 are EIF4EBP1/2/3 binding; sequence ETLLCLIG. MRNA-binding positions include 157 to 162 and 205 to 207; these read RAKGDK and TKS. At Ser-209 the chain carries Phosphoserine; by PKC and MKNK2.

The protein belongs to the eukaryotic initiation factor 4E family. As to quaternary structure, eIF4F is a multi-subunit complex, the composition of which varies with external and internal environmental conditions. It is composed of at least EIF4A, EIF4E and EIF4G1/EIF4G3. EIF4E is also known to interact with other partners. Interacts with EIF4ENIF1/4E-T; promotes recruitment to P-bodies and import into the nucleus. Hypophosphorylated EIF4EBP1, EIF4EBP2 and EIF4EBP3 compete with EIF4G1/EIF4G3 to interact with EIF4E; insulin stimulated MAP-kinase (MAPK1 and MAPK3) phosphorylation of EIF4EBP1 causes dissociation of the complex allowing EIF4G1/EIF4G3 to bind and consequent initiation of translation. Interacts mutually exclusive with EIF4A1 or EIF4A2. Interacts with NGDN and PIWIL2. Component of the CYFIP1-EIF4E-FMR1 complex composed of CYFIP, EIF4E and FMR1. Interacts directly with CYFIP1. Interacts with CLOCK. Binds to MKNK2 in nucleus. Interacts with LIMD1, WTIP and AJUBA. Interacts with APOBEC3G in an RNA-dependent manner. Interacts with LARP1. Interacts with METTL3. Interacts with RBM24; this interaction prevents EIF4E from binding to p53/TP53 mRNA and inhibits the assembly of translation initiation complex. Interacts with DDX3X; interaction is direct and in an RNA-independent manner; this interaction enhances EIF4E cap-binding ability and is required for the repression of cap-dependent translation and the increase of IRES-mediated translation. DDX3X competes with EIF4G1 for interaction with EIF4E. Interacts with EIF4G1; which in a mutual exclusive interaction associates either with EIF1 or with EIF4E on a common binding site. Interacts with BTG4 and CNOT7. Interacts with LRPPRC (via N-terminus); the interaction promotes association of EIF4E with 4ESE-containing mRNAs. Interacts with mRNA cleavage enzyme CPSF3 and its cofactor CPSF1. Interacts (via RING-type zinc finger) with PML; the interaction results in conformational changes of both interacting proteins and reduces EIF4E affinity for the 5' m7G cap of mRNA, thus reducing EIF4E-mediated mRNA nuclear export. Interacts with homeobox protein HHEX/PRH; the interaction inhibits EIF4E-mediated mRNA nuclear export. Interacts with homeobox protein HOXA9; the interaction positively regulates EIF4E-mediated mRNA nuclear export. Interacts with homeobox protein EMX2. (Microbial infection) Interacts with murine norovirus viral genome-linked protein; this interaction plays a role in translation of viral proteins. In terms of processing, phosphorylation increases the ability of the protein to bind to mRNA caps and to form the eIF4F complex. Phosphorylation also enhances its mRNA transport function. Phosphorylation at Ser-209 is not essential for protein synthesis.

It is found in the cytoplasm. Its subcellular location is the P-body. The protein localises to the stress granule. The protein resides in the nucleus. It localises to the nucleus speckle. It is found in the nuclear body. Its function is as follows. Acts in the cytoplasm to initiate and regulate protein synthesis and is required in the nucleus for export of a subset of mRNAs from the nucleus to the cytoplasm which promotes processes such as RNA capping, processing and splicing. Component of the protein complex eIF4F, which is involved in the recognition of the mRNA cap, ATP-dependent unwinding of 5'-terminal secondary structure and recruitment of mRNA to the ribosome. This protein recognizes and binds the 7-methylguanosine (m7G)-containing mRNA cap during an early step in the initiation of protein synthesis and facilitates ribosome binding by inducing the unwinding of the mRNAs secondary structures. Together with EIF4G1, antagonizes the scanning promoted by EIF1-EIF4G1 and is required for TISU translation, a process where the TISU element recognition makes scanning unnecessary. In addition to its role in translation initiation, also acts as a regulator of translation and stability in the cytoplasm. Component of the CYFIP1-EIF4E-FMR1 complex which binds to the mRNA cap and mediates translational repression: in the complex, EIF4E mediates the binding to the mRNA cap. Component of a multiprotein complex that sequesters and represses translation of proneurogenic factors during neurogenesis. In P-bodies, component of a complex that mediates the storage of translationally inactive mRNAs in the cytoplasm and prevents their degradation. May play an important role in spermatogenesis through translational regulation of stage-specific mRNAs during germ cell development. As well as its roles in translation, also involved in mRNA nucleocytoplasmic transport. Its role in mRNA export from the nucleus to the cytoplasm relies on its ability to bind the m7G cap of RNAs and on the presence of the 50-nucleotide EIF4E sensitivity element (4ESE) in the 3'UTR of sensitive transcripts. Interaction with the 4ESE is mediated by LRPPRC which binds simultaneously to both EIF4E and the 4ESE, thereby acting as a platform for assembly for the RNA export complex. EIF4E-dependent mRNA export is independent of ongoing protein or RNA synthesis and is also NFX1-independent but is XPO1-dependent with LRPPRC interacting with XPO1 to form an EIF4E-dependent mRNA export complex. Alters the composition of the cytoplasmic face of the nuclear pore to promote RNA export by reducing RANBP2 expression, relocalizing nucleoporin NUP214 and increasing expression of RANBP1 and RNA export factors DDX19 and GLE1. Promotes the nuclear export of cyclin CCND1 mRNA. Promotes the nuclear export of NOS2/iNOS mRNA. Promotes the nuclear export of MDM2 mRNA. Also promotes the export of additional mRNAs, including others involved in the cell cycle. In the nucleus, binds to capped splice factor-encoding mRNAs and stimulates their nuclear export to enhance splice factor production by increasing their cytoplasmic availability to the translation machinery. May also regulate splicing through interaction with the spliceosome in an RNA and m7G cap-dependent manner. Also binds to some pre-mRNAs and may play a role in their recruitment to the spliceosome. Promotes steady-state capping of a subset of coding and non-coding RNAs by mediating nuclear export of capping machinery mRNAs including RNMT, RNGTT and RAMAC to enhance their translation. Stimulates mRNA 3'-end processing by promoting the expression of several core cleavage complex factors required for mRNA cleavage and polyadenylation, and may also have a direct effect through its interaction with the CPSF3 cleavage enzyme. Rescues cells from apoptosis by promoting activation of serine/threonine-protein kinase AKT1 through mRNA export of NBS1 which potentiates AKT1 phosphorylation and also through mRNA export of AKT1 effectors, allowing for increased production of these proteins. The polypeptide is Eukaryotic translation initiation factor 4E (Mus musculus (Mouse)).